The primary structure comprises 310 residues: Methionyl-tRNA formyltransferase (310 aa).

S111–P114 provides a ligand contact to (6S)-5,6,7,8-tetrahydrofolate.

The protein belongs to the Fmt family.

The enzyme catalyses L-methionyl-tRNA(fMet) + (6R)-10-formyltetrahydrofolate = N-formyl-L-methionyl-tRNA(fMet) + (6S)-5,6,7,8-tetrahydrofolate + H(+). Its function is as follows. Attaches a formyl group to the free amino group of methionyl-tRNA(fMet). The formyl group appears to play a dual role in the initiator identity of N-formylmethionyl-tRNA by promoting its recognition by IF2 and preventing the misappropriation of this tRNA by the elongation apparatus. The sequence is that of Methionyl-tRNA formyltransferase from Nitrobacter hamburgensis (strain DSM 10229 / NCIMB 13809 / X14).